The primary structure comprises 298 residues: Tyrosine recombinase XerC (298 aa).

In terms of domain architecture, Core-binding (CB) spans 1–83 (MHAAVERFLH…ALSRFADHLV (83 aa)). One can recognise a Tyr recombinase domain in the interval 104–283 (HLPRPVDVDQ…DWQHLADAYD (180 aa)). Active-site residues include arginine 144, lysine 166, histidine 235, arginine 238, and histidine 261. Residue tyrosine 270 is the O-(3'-phospho-DNA)-tyrosine intermediate of the active site.

The protein belongs to the 'phage' integrase family. XerC subfamily. Forms a cyclic heterotetrameric complex composed of two molecules of XerC and two molecules of XerD.

It is found in the cytoplasm. Site-specific tyrosine recombinase, which acts by catalyzing the cutting and rejoining of the recombining DNA molecules. The XerC-XerD complex is essential to convert dimers of the bacterial chromosome into monomers to permit their segregation at cell division. It also contributes to the segregational stability of plasmids. This is Tyrosine recombinase XerC from Chromohalobacter salexigens (strain ATCC BAA-138 / DSM 3043 / CIP 106854 / NCIMB 13768 / 1H11).